Consider the following 598-residue polypeptide: Nuclear receptor subfamily 4 group A member 1 (598 aa).

Disordered stretches follow at residues 1 to 50 and 120 to 159; these read MPCI…PTAL and LDETLSSSGSDYYGSPCSAPSPSTPSFQPPQLSPWDGSFG. 2 stretches are compositionally biased toward low complexity: residues 37-50 and 134-145; these read LASPEAAPTAPTAL and SPCSAPSPSTPS. Positions 171–466 are required for nuclear import; the sequence is RAWTEQLPKA…PAEGKLIFCS (296 aa). A DNA-binding region (nuclear receptor) is located at residues 264 to 339; the sequence is EGRCAVCGDN…VGMVKEVVRT (76 aa). 2 NR C4-type zinc fingers span residues 267–287 and 303–327; these read CAVCGDNASCQHYGVRTCEGC and CLANKDCPVDKRRRNRCQFCRFQKC. The tract at residues 268–354 is required for binding NBRE-containing DNA; it reads AVCGDNASCQ…RRGRLPSKPK (87 aa). The required for the interaction with RXRA stretch occupies residues 299 to 361; the sequence is AKYICLANKD…KPKQPPDASP (63 aa). Ser341 carries the phosphoserine; by PKA modification. A disordered region spans residues 341–361; it reads SLKGRRGRLPSKPKQPPDASP. Phosphoserine; by PKA, RPS6KA1 and RPS6KA3 is present on Ser351. An NR LBD domain is found at 360–595; the sequence is SPANLLTSLV…PIVDKIFMDT (236 aa). The segment at 521–544 is binds lipopolysaccharide; the sequence is PRRVEELQNRIASCLKEHVSAVAG. The tract at residues 584–595 is AF-2; the sequence is PPPIVDKIFMDT.

Belongs to the nuclear hormone receptor family. NR4 subfamily. Binds the NGFI-B response element (NBRE) as a monomer. Binds the Nur response element (NurRE), consisting of two inverse NBRE-related octanucleotide repeats separated by 6 base-pairs, as a dimer. Interacts (via N-terminus) with NLRP3 (via LRR repeat domain); the interaction is direct, requires binding of NR4A1/Nur77 to NBRE-containing dsDNA and lipopolysaccharide, and leads to non-canonical NLRP3 inflammasome activation. Interacts with GADD45GIP1. Interacts with STK11. Heterodimer (via DNA-binding domain) with RXRA (via C-terminus); DNA-binding of the heterodimer is enhanced by 9-cis retinoic acid. Competes for the RXRA interaction with EP300 and thereby attenuates EP300 mediated acetylation of RXRA. Interacts with NCOA1. Interacts with NCOA2. Interacts with NCOA3. Zn(2+) is required as a cofactor. Post-translationally, phosphorylated at Ser-351 by RPS6KA1 and RPS6KA3 in response to mitogenic or stress stimuli. In terms of processing, acetylated by p300/CBP, acetylation increases stability. Deacetylated by HDAC1.

It localises to the cytoplasm. Its subcellular location is the cytosol. The protein resides in the nucleus. It is found in the mitochondrion. Its function is as follows. Orphan nuclear receptor. Binds the NGFI-B response element (NBRE) 5'-AAAGGTCA-3'. Binds 9-cis-retinoic acid outside of its ligand-binding (NR LBD) domain. Participates in energy homeostasis by sequestrating the kinase STK11 in the nucleus, thereby attenuating cytoplasmic AMPK activation. Regulates the inflammatory response in macrophages by regulating metabolic adaptations during inflammation, including repressing the transcription of genes involved in the citric acid cycle (TCA). Inhibits NF-kappa-B signaling by binding to low-affinity NF-kappa-B binding sites, such as at the IL2 promoter. May act concomitantly with NR4A2 in regulating the expression of delayed-early genes during liver regeneration. Plays a role in the vascular response to injury. Functionally, in the cytosol, upon its detection of both bacterial lipopolysaccharide (LPS) and NBRE-containing mitochondrial DNA released by GSDMD pores during pyroptosis, it promotes non-canonical NLRP3 inflammasome activation by stimulating association of NLRP3 and NEK7. This Canis lupus familiaris (Dog) protein is Nuclear receptor subfamily 4 group A member 1 (NR4A1).